An 869-amino-acid chain; its full sequence is Valine--tRNA ligase (869 aa).

The 'HIGH' region signature appears at 47-57 (PYPTGNFHIGN). The 'KMSKS' region signature appears at 521-525 (KMSKS). Position 524 (K524) interacts with ATP.

Belongs to the class-I aminoacyl-tRNA synthetase family. ValS type 2 subfamily.

The protein localises to the cytoplasm. It carries out the reaction tRNA(Val) + L-valine + ATP = L-valyl-tRNA(Val) + AMP + diphosphate. In terms of biological role, catalyzes the attachment of valine to tRNA(Val). As ValRS can inadvertently accommodate and process structurally similar amino acids such as threonine, to avoid such errors, it has a 'posttransfer' editing activity that hydrolyzes mischarged Thr-tRNA(Val) in a tRNA-dependent manner. This is Valine--tRNA ligase from Methanosarcina barkeri (strain Fusaro / DSM 804).